Consider the following 146-residue polypeptide: Large ribosomal subunit protein uL15 (146 aa).

The span at 1–13 (MKLHELHSAEGSR) shows a compositional bias: basic and acidic residues. A disordered region spans residues 1 to 55 (MKLHELHSAEGSRRNRKRVGRGTSSGYGKTSGRGQKGQLARQGGHTRLGFEGGQM). The segment covering 23 to 35 (TSSGYGKTSGRGQ) has biased composition (gly residues).

This sequence belongs to the universal ribosomal protein uL15 family. In terms of assembly, part of the 50S ribosomal subunit.

Functionally, binds to the 23S rRNA. This Lactobacillus helveticus (strain DPC 4571) protein is Large ribosomal subunit protein uL15.